A 223-amino-acid chain; its full sequence is Protein NrfC (223 aa).

Residues Met-1–Ala-27 constitute a signal peptide (tat-type signal). 3 4Fe-4S ferredoxin-type domains span residues Tyr-37 to Gly-65, Val-83 to Ala-114, and Gly-116 to Val-145. [4Fe-4S] cluster contacts are provided by Cys-46, Cys-49, Cys-52, Cys-56, Cys-92, Cys-95, Cys-100, Cys-104, Cys-125, Cys-128, Cys-131, Cys-135, Cys-152, Cys-155, Cys-168, and Cys-172.

In terms of processing, predicted to be exported by the Tat system. The position of the signal peptide cleavage has not been experimentally proven.

In terms of biological role, probably involved in the transfer of electrons from the quinone pool to the type-c cytochromes. The polypeptide is Protein NrfC (nrfC) (Escherichia coli O157:H7).